The sequence spans 879 residues: Alanine--tRNA ligase (879 aa).

4 residues coordinate Zn(2+): H566, H570, C668, and H672.

It belongs to the class-II aminoacyl-tRNA synthetase family. Zn(2+) is required as a cofactor.

The protein localises to the cytoplasm. It catalyses the reaction tRNA(Ala) + L-alanine + ATP = L-alanyl-tRNA(Ala) + AMP + diphosphate. In terms of biological role, catalyzes the attachment of alanine to tRNA(Ala) in a two-step reaction: alanine is first activated by ATP to form Ala-AMP and then transferred to the acceptor end of tRNA(Ala). Also edits incorrectly charged Ser-tRNA(Ala) and Gly-tRNA(Ala) via its editing domain. In Clostridium beijerinckii (strain ATCC 51743 / NCIMB 8052) (Clostridium acetobutylicum), this protein is Alanine--tRNA ligase.